Consider the following 154-residue polypeptide: Lipoprotein signal peptidase (154 aa).

4 helical membrane passes run 8 to 28, 36 to 56, 66 to 86, and 88 to 108; these read AFFL…YWAL, IVVN…AFSF, WLFA…LLTK, and HHWL…GNLY. Residues Asp118 and Asp136 contribute to the active site. The chain crosses the membrane as a helical span at residues 129 to 149; sequence WPVFNLADVAITLGVILMLIA.

This sequence belongs to the peptidase A8 family.

The protein localises to the cell inner membrane. The catalysed reaction is Release of signal peptides from bacterial membrane prolipoproteins. Hydrolyzes -Xaa-Yaa-Zaa-|-(S,diacylglyceryl)Cys-, in which Xaa is hydrophobic (preferably Leu), and Yaa (Ala or Ser) and Zaa (Gly or Ala) have small, neutral side chains.. It functions in the pathway protein modification; lipoprotein biosynthesis (signal peptide cleavage). In terms of biological role, this protein specifically catalyzes the removal of signal peptides from prolipoproteins. In Dichelobacter nodosus (strain VCS1703A), this protein is Lipoprotein signal peptidase.